The primary structure comprises 101 residues: MAHKKAGGSSRNGRDSRSKRLGIKKYGGEYVSSGNILVRQRGTKFHPGENVKCGKDYTLYSIIEGIVKFKKRGKLKKKYISVIKLNNLNKKLQNRQISIKY.

The segment at 1 to 21 (MAHKKAGGSSRNGRDSRSKRL) is disordered.

The protein belongs to the bacterial ribosomal protein bL27 family.

The protein is Large ribosomal subunit protein bL27 of Buchnera aphidicola subsp. Cinara cedri (strain Cc).